The chain runs to 279 residues: Phosphate import ATP-binding protein PstB (279 aa).

Residues 33–274 (LDINKLNLFY…PLKKKTEDYI (242 aa)) enclose the ABC transporter domain. 65–72 (GPSGCGKS) lines the ATP pocket.

Belongs to the ABC transporter superfamily. Phosphate importer (TC 3.A.1.7) family. The complex is composed of two ATP-binding proteins (PstB), two transmembrane proteins (PstC and PstA) and a solute-binding protein (PstS).

It localises to the cell inner membrane. It carries out the reaction phosphate(out) + ATP + H2O = ADP + 2 phosphate(in) + H(+). Part of the ABC transporter complex PstSACB involved in phosphate import. Responsible for energy coupling to the transport system. In Colwellia psychrerythraea (strain 34H / ATCC BAA-681) (Vibrio psychroerythus), this protein is Phosphate import ATP-binding protein PstB.